The primary structure comprises 394 residues: MSVFRFLLFLSLLVGSNAFVKPQYNVTGQIDSALQRFFGITLPSLKIPDLLNPDKKRNPPSVGQLKKTSFPLCNVNLPPIFFTISLFRIKLPNLIPTALPVIKLPTIKIPNILPTLPTIKVPTIKIPDIIPITLPTIKIPEVVPTNLPTVEIPHFIPKTLPTVKIPNIIPTNFPTIETPDIIPKILPTIKIPEIIPLTLPTVKIPDIIPITLPTIKIPEIVPTKLPTVEVPDTIPKTLPTTKIPDIVPITSPTVKIPQIIPTIKIPDIIPKNLSTLGPIKLPTIKLPTLPHILPTKSPKPTPSHKGNMVCDICEKVIGVLTTRLLEIIQKFRVEADKFLTKLCTSLTSNPKTLTVGTMCVMFKGNIMDTIFKGFDGLKKNLEPVSFCKHVPFCK.

The signal sequence occupies residues 1–18 (MSVFRFLLFLSLLVGSNA). N25 and N272 each carry an N-linked (GlcNAc...) asparagine glycan. Residues 306 to 394 (GNMVCDICEK…SFCKHVPFCK (89 aa)) enclose the Saposin B-type domain. 3 disulfide bridges follow: C310–C393, C313–C387, and C343–C359.

The polypeptide is Saposin-like protein 11 (spp-11) (Caenorhabditis elegans).